Here is a 249-residue protein sequence, read N- to C-terminus: DNA repair protein RecO (249 aa).

It belongs to the RecO family.

In terms of biological role, involved in DNA repair and RecF pathway recombination. This Lactobacillus delbrueckii subsp. bulgaricus (strain ATCC BAA-365 / Lb-18) protein is DNA repair protein RecO.